The sequence spans 429 residues: Adenylosuccinate synthetase (429 aa).

Residues 12–18 (GDEGKGK) and 40–42 (GHT) contribute to the GTP site. Catalysis depends on Asp13, which acts as the Proton acceptor. Mg(2+) is bound by residues Asp13 and Gly40. IMP contacts are provided by residues 13–16 (DEGK), 38–41 (NAGH), Thr129, Arg143, Gln223, Thr238, and Arg302. His41 functions as the Proton donor in the catalytic mechanism. 298-304 (TVTGRKR) provides a ligand contact to substrate. Residues Arg304, 330-332 (KLD), and 412-414 (STS) contribute to the GTP site.

It belongs to the adenylosuccinate synthetase family. In terms of assembly, homodimer. Mg(2+) is required as a cofactor.

Its subcellular location is the cytoplasm. The enzyme catalyses IMP + L-aspartate + GTP = N(6)-(1,2-dicarboxyethyl)-AMP + GDP + phosphate + 2 H(+). The protein operates within purine metabolism; AMP biosynthesis via de novo pathway; AMP from IMP: step 1/2. Plays an important role in the de novo pathway of purine nucleotide biosynthesis. Catalyzes the first committed step in the biosynthesis of AMP from IMP. The chain is Adenylosuccinate synthetase from Sphingopyxis alaskensis (strain DSM 13593 / LMG 18877 / RB2256) (Sphingomonas alaskensis).